The sequence spans 251 residues: Ribosomal RNA small subunit methyltransferase G (251 aa).

S-adenosyl-L-methionine contacts are provided by residues glycine 74, phenylalanine 79, 125 to 126 (AE), and arginine 144. The interval 224–251 (RPAGLPTQHPLGAIEGAPRVESEEPEEP) is disordered.

It belongs to the methyltransferase superfamily. RNA methyltransferase RsmG family.

It is found in the cytoplasm. In terms of biological role, specifically methylates the N7 position of a guanine in 16S rRNA. The chain is Ribosomal RNA small subunit methyltransferase G from Gloeobacter violaceus (strain ATCC 29082 / PCC 7421).